A 360-amino-acid chain; its full sequence is Phospho-N-acetylmuramoyl-pentapeptide-transferase (360 aa).

The next 10 helical transmembrane spans lie at 27 to 47 (GALF…ISLL), 70 to 90 (GTPT…ILLW), 98 to 118 (VWVT…DDYL), 134 to 154 (LLLE…YSPA), 168 to 188 (ALLN…VGAG), 199 to 219 (GLAI…AYLV), 239 to 259 (LAVV…FNAP), 263 to 283 (IFMG…IAVA), 288 to 308 (IVLA…IIQV), and 337 to 357 (QVVI…LATL).

This sequence belongs to the glycosyltransferase 4 family. MraY subfamily. The cofactor is Mg(2+).

The protein resides in the cell inner membrane. It carries out the reaction UDP-N-acetyl-alpha-D-muramoyl-L-alanyl-gamma-D-glutamyl-meso-2,6-diaminopimeloyl-D-alanyl-D-alanine + di-trans,octa-cis-undecaprenyl phosphate = di-trans,octa-cis-undecaprenyl diphospho-N-acetyl-alpha-D-muramoyl-L-alanyl-D-glutamyl-meso-2,6-diaminopimeloyl-D-alanyl-D-alanine + UMP. Its pathway is cell wall biogenesis; peptidoglycan biosynthesis. In terms of biological role, catalyzes the initial step of the lipid cycle reactions in the biosynthesis of the cell wall peptidoglycan: transfers peptidoglycan precursor phospho-MurNAc-pentapeptide from UDP-MurNAc-pentapeptide onto the lipid carrier undecaprenyl phosphate, yielding undecaprenyl-pyrophosphoryl-MurNAc-pentapeptide, known as lipid I. The protein is Phospho-N-acetylmuramoyl-pentapeptide-transferase of Methylorubrum populi (strain ATCC BAA-705 / NCIMB 13946 / BJ001) (Methylobacterium populi).